Reading from the N-terminus, the 267-residue chain is Hydroxynaphthalene reductase-like protein Arp2 (267 aa).

NADP(+) is bound by residues isoleucine 25, asparagine 45, aspartate 71, and asparagine 98. Residues serine 147 and serine 148 each act as proton donor in the active site. Tyrosine 162, lysine 166, valine 195, and threonine 197 together coordinate NADP(+). The active-site Proton acceptor is tyrosine 162. Catalysis depends on lysine 166, which acts as the Lowers pKa of active site Tyr.

Belongs to the short-chain dehydrogenases/reductases (SDR) family.

Hydroxynaphthalene reductase-like protein; part of the Pks2 gene cluster that mediates the formation of infectious structures (appressoria), enabling these fungi to kill insects faster. The product of the Pks2 gene cluster is different from the one of Pks1 and has still not been identified. In Metarhizium brunneum (strain ARSEF 3297), this protein is Hydroxynaphthalene reductase-like protein Arp2.